Reading from the N-terminus, the 453-residue chain is Phosphatidylserine decarboxylase proenzyme 1, mitochondrial (453 aa).

The N-terminal 29 residues, M1 to F29, are a transit peptide targeting the mitochondrion. The Mitochondrial matrix segment spans residues S30–P74. Residues G75–Y93 form a helical membrane-spanning segment. Topologically, residues E94–E453 are mitochondrial intermembrane. Catalysis depends on charge relay system; for autoendoproteolytic cleavage activity residues D199, H296, and S408. The Schiff-base intermediate with substrate; via pyruvic acid; for decarboxylase activity role is filled by S408. A Pyruvic acid (Ser); by autocatalysis modification is found at S408.

It belongs to the phosphatidylserine decarboxylase family. PSD-B subfamily. Eukaryotic type I sub-subfamily. As to quaternary structure, heterodimer of a large membrane-associated beta subunit and a small pyruvoyl-containing alpha subunit. It depends on pyruvate as a cofactor. In terms of processing, is synthesized initially as an inactive proenzyme. Formation of the active enzyme involves a self-maturation process in which the active site pyruvoyl group is generated from an internal serine residue via an autocatalytic post-translational modification. Two non-identical subunits are generated from the proenzyme in this reaction, and the pyruvate is formed at the N-terminus of the alpha chain, which is derived from the carboxyl end of the proenzyme. The autoendoproteolytic cleavage occurs by a canonical serine protease mechanism, in which the side chain hydroxyl group of the serine supplies its oxygen atom to form the C-terminus of the beta chain, while the remainder of the serine residue undergoes an oxidative deamination to produce ammonia and the pyruvoyl prosthetic group on the alpha chain. During this reaction, the Ser that is part of the protease active site of the proenzyme becomes the pyruvoyl prosthetic group, which constitutes an essential element of the active site of the mature decarboxylase. As to expression, expressed in roots, leaves, stems and flowers.

The protein resides in the mitochondrion. Its subcellular location is the mitochondrion inner membrane. It carries out the reaction a 1,2-diacyl-sn-glycero-3-phospho-L-serine + H(+) = a 1,2-diacyl-sn-glycero-3-phosphoethanolamine + CO2. The protein operates within phospholipid metabolism; phosphatidylethanolamine biosynthesis; phosphatidylethanolamine from CDP-diacylglycerol: step 2/2. Its function is as follows. Catalyzes the formation of phosphatidylethanolamine (PtdEtn) from phosphatidylserine (PtdSer). Plays a central role in phospholipid metabolism and in the interorganelle trafficking of phosphatidylserine. Contributes only to a minor proportion of PtdEtn production. This Arabidopsis thaliana (Mouse-ear cress) protein is Phosphatidylserine decarboxylase proenzyme 1, mitochondrial (PSD1).